A 380-amino-acid polypeptide reads, in one-letter code: SAM and SH3 domain-containing protein 3 (380 aa).

Residues 1-174 (MLRRKPSNAS…STAPQYTGPF (174 aa)) are disordered. Residues 22-41 (LQRSSSFKDFAKSKPSSPVV) show a composition bias toward low complexity. Serine 27, serine 34, and serine 42 each carry phosphoserine. Position 61 is a phosphothreonine (threonine 61). Over residues 84-93 (MNRKTGKKMV) the composition is skewed to basic residues. Serine 97 bears the Phosphoserine mark. Threonine 103 is subject to Phosphothreonine. A Phosphoserine modification is found at serine 110. Phosphothreonine is present on threonine 112. Serine 113 and serine 120 each carry phosphoserine. Positions 143–158 (RQASTGSELCSPSPGS) are enriched in polar residues. Residues 173 to 234 (PFCGRARVHT…KFIYVDVLPE (62 aa)) form the SH3 domain. Residues 252-316 (PKPKTLHELL…LTAAELLLDY (65 aa)) enclose the SAM domain. At threonine 318 the chain carries Phosphothreonine. Residues 318-327 (TGSEEAEEGT) show a composition bias toward acidic residues. The segment at 318–380 (TGSEEAEEGT…LHGLSLSGAP (63 aa)) is disordered. Phosphoserine is present on serine 320.

This sequence belongs to the SASH family.

May function as a signaling adapter protein in lymphocytes. In Bos taurus (Bovine), this protein is SAM and SH3 domain-containing protein 3.